Here is a 428-residue protein sequence, read N- to C-terminus: Enolase (428 aa).

Gln162 contributes to the (2R)-2-phosphoglycerate binding site. Glu204 (proton donor) is an active-site residue. The Mg(2+) site is built by Asp241, Glu282, and Asp309. (2R)-2-phosphoglycerate is bound by residues Lys334, Arg363, Ser364, and Lys385. The Proton acceptor role is filled by Lys334.

It belongs to the enolase family. It depends on Mg(2+) as a cofactor.

Its subcellular location is the cytoplasm. It is found in the secreted. It localises to the cell surface. The catalysed reaction is (2R)-2-phosphoglycerate = phosphoenolpyruvate + H2O. It participates in carbohydrate degradation; glycolysis; pyruvate from D-glyceraldehyde 3-phosphate: step 4/5. Catalyzes the reversible conversion of 2-phosphoglycerate (2-PG) into phosphoenolpyruvate (PEP). It is essential for the degradation of carbohydrates via glycolysis. This is Enolase from Mycobacterium ulcerans (strain Agy99).